The chain runs to 81 residues: RBAK downstream neighbor protein (81 aa).

The first 22 residues, 1–22, serve as a signal peptide directing secretion; it reads MWPPLLLLLLLLPAAPVPTAKA.

It is found in the secreted. In Homo sapiens (Human), this protein is RBAK downstream neighbor protein (RBAKDN).